The following is a 3616-amino-acid chain: Replicase polyprotein 1ab (3616 aa).

Residues 8–28 form a C4-type; atypical zinc finger; that stretch reads CLCTPNARVFWEHGQVYCTRC. Positions 69-181 constitute a Peptidase C31 domain; it reads ECRPGGLCWL…KGLCPFSDAR (113 aa). Catalysis depends on for Nsp1-alpha papain-like cysteine proteinase activity residues Cys76 and His147. Residues 262-381 form the Peptidase C32 domain; the sequence is NDTKFSKCWE…FRFQTRKYYG (120 aa). Catalysis depends on for Nsp1-beta papain-like cysteine proteinase activity residues Cys269 and His340. The 106-residue stretch at 381–486 folds into the Peptidase C33 domain; that stretch reads GYSPPGDGAC…RGVCGGECKF (106 aa). Residues Cys390 and His456 each act as for Nsp2 cysteine proteinase activity in the active site. Disordered regions lie at residues 672-706 and 883-912; these read SRAL…REVP and PLKS…GAPR. Residues 676–690 are compositionally biased toward basic residues; that stretch reads KSAKPKRKRNKKKKT. Residues 903 to 912 are compositionally biased toward polar residues; the sequence is DQLSQDGAPR. Helical transmembrane passes span 942–962, 977–997, 1010–1030, 1060–1080, 1085–1105, 1289–1309, 1364–1384, 1386–1406, and 1425–1445; these read WLNH…SVVL, LFCL…FIPL, LSVF…VLPE, HIGV…VGGP, FYFL…AVAL, VADF…SAWL, ALMI…SLLV, VICV…VIAF, and VQFF…VILI. Positions 981 to 1105 are HD1; it reads CCVLLCFHFP…LGLVFLAVAL (125 aa). Residues 1289–1448 are HD2; sequence VADFVCLGLY…AVAVILISSW (160 aa). The Peptidase S32 domain maps to 1513-1714; that stretch reads GSLRTRGCAK…AVVESLPTPE (202 aa). Active-site charge relay system; for 3C-like serine proteinase activity residues include His1551, Asp1576, and Ser1628. The next 4 membrane-spanning stretches (helical) occupy residues 1715–1735, 1737–1757, 1761–1781, and 1832–1852; these read GALS…LIHV, FVPV…VVLA, FSFA…VLLL, and SKEI…LSLF. The tract at residues 1737 to 1852 is HD3; sequence FVPVIAVAFF…HVLALLLSLF (116 aa). One can recognise a NiRAN domain in the interval 2194–2352; that stretch reads SLNGLQQSSA…LPYKLHPVRG (159 aa). A RdRp catalytic domain is found at 2590-2724; the sequence is GRCLEADLAS…YNESDELPNY (135 aa). In terms of domain architecture, AV ZBD spans 2844–2907; that stretch reads KKKCRTCAHC…SSAMNLNTEL (64 aa). Residues Cys2850, Cys2853, Cys2863, Cys2868, His2871, His2873, His2875, His2877, Cys2884, His2886, Cys2893, and Cys2896 each contribute to the Zn(2+) site. A (+)RNA virus helicase ATP-binding domain is found at 2964-3116; sequence QVMKVAQTCA…AFSLMPGRQL (153 aa). Position 2992 to 2999 (2992 to 2999) interacts with ATP; the sequence is GAPGTGKT. The (+)RNA virus helicase C-terminal domain maps to 3117-3248; that stretch reads IEVFRFGPAV…CGDQPKMIVG (132 aa). Residues 3272–3368 form the AV-Nsp11N/CoV-Nsp15M domain; sequence EGTASPLPQV…LTKYLKGESV (97 aa). One can recognise a NendoU domain in the interval 3370–3492; sequence LPDSIMSTGR…MVWKDATAYF (123 aa).

The protein belongs to the arteriviridae polyprotein family. Specific enzymatic cleavages in vivo by its own proteases yield mature proteins. There are two alternative pathways for processing. Either nsp4-5 is cleaved, which represents the major pathway or the nsp5-6 and nsp6-7 are processed, which represents the minor pathway. The major pathway occurs when nsp2 acts as a cofactor for nsp4.

It localises to the host membrane. The protein resides in the host cytoplasm. The protein localises to the host perinuclear region. The catalysed reaction is RNA(n) + a ribonucleoside 5'-triphosphate = RNA(n+1) + diphosphate. It carries out the reaction ATP + H2O = ADP + phosphate + H(+). The enzyme catalyses uridylyl-uridylyl-ribonucleotide-RNA = a 3'-end uridylyl-2',3'-cyclophospho-uridine-RNA + a 5'-end dephospho-ribonucleoside-RNA. In terms of biological role, the replicase polyprotein 1ab is a multifunctional protein: it contains the activities necessary for the transcription of negative stranded RNA, leader RNA, subgenomic mRNAs and progeny virion RNA as well as proteinases responsible for the cleavage of the polyprotein into functional products. Its function is as follows. The Nsp1 chain is essential for viral subgenomic mRNA synthesis. Functionally, the 3C-like serine proteinase chain is responsible for the majority of cleavages as it cleaves the C-terminus of the polyprotein. The helicase chain, which contains a zinc finger structure, displays RNA and DNA duplex-unwinding activities with 5' to 3' polarity. In terms of biological role, plays a role in viral transcription/replication and prevents the simultaneous activation of host cell dsRNA sensors, such as MDA5/IFIH1, OAS, and PKR. Acts by degrading the 5'-polyuridines generated during replication of the poly(A) region of viral genomic and subgenomic RNAs. Catalyzes a two-step reaction in which a 2'3'-cyclic phosphate (2'3'-cP) is first generated by 2'-O transesterification, which is then hydrolyzed to a 3'-phosphate (3'-P). If not degraded, poly(U) RNA would hybridize with poly(A) RNA tails and activate host dsRNA sensors. This chain is Replicase polyprotein 1ab (rep), found in Mus musculus domesticus (western European house mouse).